A 504-amino-acid chain; its full sequence is MDDICCKDIISDLPEALICHLLSFVPTKEAALTSLLSEKWRYLFAFAPILDFDDSVWMQSPLVYMNEVHRKFMDFVDRVLGLQGNSTLVRFSLNCRNGIDRECIFRWISNVIERGVSDLDLGGNFVSNRSMPSSVFVSKSLVKLRIRTENCTIIDLEDVFLPKLKTLDLSSIWFRDGDTCLLKLISGCQVLEDLTMSDLWWDGYWNRSMSSKTLKRLTVHCSDWDRSPGSISFDTPNLVYFEYFDLVADKYEVVNFDSLVEASIGLRMRHHQRAHASYGDLVVNATNLFMGISNVRILQLFSNALEVLTFCCAPIPVFKKLIHLTVETDKDVGWESLPALLKNCPNLETLVFKGLHHRSTSKCQDTDGCLCKSSKDIRSCLSSSPVKVLKILKFGEVASYFGDEEKQLELVKYFLETMPNLEQMILHYNTRISEGVKSQLDWLVPRVSSSKCSVQLICDNAPTYPFYGGIICDNFITPAPTYPFFGDPLHGMVIPYMGDQPHFI.

Residues 7 to 60 (KDIISDLPEALICHLLSFVPTKEAALTSLLSEKWRYLFAFAPILDFDDSVWMQS) enclose the F-box domain. LRR repeat units follow at residues 69–95 (HRKF…SLNC), 145–171 (RIRT…DLSS), 173–198 (WFRD…TMSD), 286–312 (TNLF…TFCC), 329–354 (DKDV…VFKG), 369–396 (CLCK…KFGE), and 403–428 (DEEK…ILHY). Residues 382-427 (SSSPVKVLKILKFGEVASYFGDEEKQLELVKYFLETMPNLEQMILH) enclose the FBD domain.

This Arabidopsis thaliana (Mouse-ear cress) protein is Putative F-box/FBD/LRR-repeat protein At3g59240.